A 644-amino-acid polypeptide reads, in one-letter code: MGKIRKLDDQLSNLIAAGEVVERPASVVKELVENSIDANSTSIEIHLEEAGLSKIRIIDNGDGIAEEDCIVAFERHATSKIKDENDLFRIRTLGFRGEALPSIASVSELELITSTGDAPGTHLSIKGGDIIKQEKTASRKGTDITVQNLFFNTPARLKYMKTIHTELGNITDIVYRIAMSHPEVSLKLFHNEKKLLHTSGNGDVRQVLASIYSIQVAKKLIPIEAESLDFTIKGYVTLPEVTRASRNYMSTIVNGRYVRNFVLMKAIQQGYHTLLPIGRYPIGFLSIEMDPMLVDVNVHPAKLEVRFSKEQELLKLIEETLQSAFKKIQLIPDAGVTTKKKEKDESVQEQFKFEHTKPRESSMPNIVLPTGMDEKQEETTTVKQPAQLWQPPKQEWQPPQSLVREEQSWQPSSKPETVREEKEWTSNDDDFELEELEEEVGEIEEIEMNGNDLPPLYPIGQMHGTYIFAQNDNGLYMIDQHAAQERINYEYFRDKVGRVTQEVQELLVPYRIDLSLTEFLRVEEQLEELKKVGLFLEQFGHQSFIVRSHPTWFPKGQETEIIDEMMEQVVKLKKVDIKKLREEAAIMMSCKASIKANQYLTNDQIFALLEELRTTTNPYTCPHGRPILVHHSTYELEKMFKRVM.

The segment covering lysine 340–glutamate 360 has biased composition (basic and acidic residues). The disordered stretch occupies residues lysine 340–threonine 425. The span at glutamine 387–glutamine 400 shows a compositional bias: low complexity. A compositionally biased stretch (basic and acidic residues) spans glutamate 416–threonine 425.

The protein belongs to the DNA mismatch repair MutL/HexB family.

This protein is involved in the repair of mismatches in DNA. It is required for dam-dependent methyl-directed DNA mismatch repair. May act as a 'molecular matchmaker', a protein that promotes the formation of a stable complex between two or more DNA-binding proteins in an ATP-dependent manner without itself being part of a final effector complex. This is DNA mismatch repair protein MutL from Bacillus mycoides (strain KBAB4) (Bacillus weihenstephanensis).